The following is a 659-amino-acid chain: Interferon-induced GTP-binding protein Mx1 (659 aa).

Met1 bears the N-acetylmethionine mark. The tract at residues 1 to 40 is disordered; it reads MVNSKGEITDSDPGSNHLLLNGLPDKAGKNQDTEPENSLC. Residues 65 to 338 enclose the Dynamin-type G domain; it reads DLALPAIAVI…LITHICKTLP (274 aa). The segment at 75–82 is G1 motif; it reads GDQSSGKS. A GTP-binding site is contributed by 75–82; that stretch reads GDQSSGKS. The segment at 100–102 is G2 motif; that stretch reads VTR. A G3 motif region spans residues 176 to 179; the sequence is DLPG. GTP contacts are provided by residues 176-180 and 245-248; these read DLPGI and TKPD. Positions 245–248 are G4 motif; that stretch reads TKPD. The segment at 277–280 is G5 motif; sequence KCRG. The interval 339-364 is bundle signaling element (BSE); sequence LLENQIKENHEKITEELKKYGSDVPE. A middle domain region spans residues 364–531; sequence EEEHEKMFFL…HFQMEQIVYC (168 aa). The tract at residues 365–629 is stalk; it reads EEHEKMFFLI…KDTYNWLLKE (265 aa). Residues 552-555 are critical for lipid-binding; the sequence is KNKK. One can recognise a GED domain in the interval 571–659; it reads LSEIFEHLLA…ARRRLAKFPG (89 aa).

This sequence belongs to the TRAFAC class dynamin-like GTPase superfamily. Dynamin/Fzo/YdjA family. In terms of assembly, homooligomer. Oligomerizes into multimeric filamentous or ring-like structures by virtue of its stalk domain. Oligomerization is critical for GTPase activity, protein stability, and recognition of viral target structures. Interacts with TRPC1, TRPC3, TRPC4, TRPC5, TRPC6 and TRPC7. Interacts with HSPA5. Interacts with TUBB/TUBB5. Interacts with DDX39A and DDX39B. In terms of processing, ISGylated.

Its subcellular location is the cytoplasm. The protein localises to the endoplasmic reticulum membrane. It is found in the perinuclear region. In terms of biological role, interferon-induced dynamin-like GTPase with antiviral activity. This chain is Interferon-induced GTP-binding protein Mx1 (MX1), found in Phoca vitulina (Harbor seal).